The primary structure comprises 852 residues: MQNLDVREAYLNFFKSKGHEITPSAPLVPNDATLLFTNAGMVPFKSIFTGEVPRPTPPIRTSCQTCIRAGGKHNDLDNVGYTARHHTFFEMLGNFSFGEYFKKDAIAYAWEFVTQVLKLPVDRLYVTVHESDDEAFELWARHIARDRIYRFGDHDNFWQMGDTGPCGPCSEIFYDQGGEHFNTPEDYMGGDGDRFLEIWNLVFMQYERSADGKLSPLPKPSIDTGMGLERVTAIMEGKFSNYDSSLFMPLIDEVAKLCGKPYSYDSGASYRVISDHIRSVTFLLAQGTTFDKEGRGYVLRRILRRAIRHGYLLGIKEPFMYKLVDKVCEMMGGHYTYLNEKKAAVKEQVRLEEERFLATIASGLELFNEELAKTKEIFSGETAFKLYDTYGFPLDLTADMLREKGLKVDEAKFDELMSEQKARAKAAWKGSGDKSSKGDFKQLLEEFGENKFSGYDELERQSKILALLDNDFKRVQNLRAGESGWVMFDVTPFYAQSGGQTGDTGEITGVGKVLDTQKFHGLNLSQVEVGKQIKTGDVLNLKVSDARAEIARHHSATHLLHAALRKILGTHVAQAGSNVEADRLRFDFSHPKALTSEELEMIEKFVNDAVASSAAAKTEIMDIEAAKNSGAIALFGEKYAENVRVLSLGNVSKELCGGTHVKNVSEIGAFFITKESGVSAGVRRIEAVCSRAALNLARGFRSELAEISNELKTNEPMVAIKKLKGEVRELKDKLKNIGDSHAIAFTSINDTKMGVAVVKSGDIKTMIDNYKNEFASLAILLLQVNDDKIAIAAGVKNAPIKAGEWVKMAAKILDGNGGGRDDFATAGGKNVPMIETAVKEAFEFAKEKLLNA.

H554, H558, C656, and H660 together coordinate Zn(2+).

This sequence belongs to the class-II aminoacyl-tRNA synthetase family. Zn(2+) is required as a cofactor.

The protein localises to the cytoplasm. The catalysed reaction is tRNA(Ala) + L-alanine + ATP = L-alanyl-tRNA(Ala) + AMP + diphosphate. Its function is as follows. Catalyzes the attachment of alanine to tRNA(Ala) in a two-step reaction: alanine is first activated by ATP to form Ala-AMP and then transferred to the acceptor end of tRNA(Ala). Also edits incorrectly charged Ser-tRNA(Ala) and Gly-tRNA(Ala) via its editing domain. The polypeptide is Alanine--tRNA ligase (Campylobacter curvus (strain 525.92)).